Consider the following 731-residue polypeptide: 1,4-alpha-glucan branching enzyme GlgB (731 aa).

Aspartate 408 (nucleophile) is an active-site residue. Glutamate 461 (proton donor) is an active-site residue.

The protein belongs to the glycosyl hydrolase 13 family. GlgB subfamily. In terms of assembly, monomer.

The catalysed reaction is Transfers a segment of a (1-&gt;4)-alpha-D-glucan chain to a primary hydroxy group in a similar glucan chain.. Its pathway is glycan biosynthesis; glycogen biosynthesis. Catalyzes the formation of the alpha-1,6-glucosidic linkages in glycogen by scission of a 1,4-alpha-linked oligosaccharide from growing alpha-1,4-glucan chains and the subsequent attachment of the oligosaccharide to the alpha-1,6 position. In Corynebacterium efficiens (strain DSM 44549 / YS-314 / AJ 12310 / JCM 11189 / NBRC 100395), this protein is 1,4-alpha-glucan branching enzyme GlgB.